The chain runs to 137 residues: Hydrogenase maturation factor HypA (137 aa).

H2 contacts Ni(2+). Zn(2+) is bound by residues C73, C75, C105, and C108.

The protein belongs to the HypA/HybF family.

Its function is as follows. Involved in the maturation of [NiFe] hydrogenases. Required for nickel insertion into the metal center of the hydrogenase. This chain is Hydrogenase maturation factor HypA, found in Methanosarcina mazei (strain ATCC BAA-159 / DSM 3647 / Goe1 / Go1 / JCM 11833 / OCM 88) (Methanosarcina frisia).